The chain runs to 599 residues: Serine hydroxymethyltransferase 6 (599 aa).

The segment at methionine 1 to proline 25 is disordered. Position 374 is an N6-(pyridoxal phosphate)lysine (lysine 374).

The protein belongs to the SHMT family. As to quaternary structure, homotetramer. Pyridoxal 5'-phosphate is required as a cofactor.

It localises to the cytoplasm. The catalysed reaction is (6R)-5,10-methylene-5,6,7,8-tetrahydrofolate + glycine + H2O = (6S)-5,6,7,8-tetrahydrofolate + L-serine. It participates in one-carbon metabolism; tetrahydrofolate interconversion. Its function is as follows. Catalyzes the interconversion of serine and glycine. This Arabidopsis thaliana (Mouse-ear cress) protein is Serine hydroxymethyltransferase 6 (SHM6).